Consider the following 208-residue polypeptide: 3-demethoxyubiquinol 3-hydroxylase (208 aa).

E57, E87, H90, E139, E171, and H174 together coordinate Fe cation.

This sequence belongs to the COQ7 family. Fe cation serves as cofactor.

It is found in the cell membrane. The catalysed reaction is a 5-methoxy-2-methyl-3-(all-trans-polyprenyl)benzene-1,4-diol + AH2 + O2 = a 3-demethylubiquinol + A + H2O. It participates in cofactor biosynthesis; ubiquinone biosynthesis. Functionally, catalyzes the hydroxylation of 2-nonaprenyl-3-methyl-6-methoxy-1,4-benzoquinol during ubiquinone biosynthesis. This Burkholderia vietnamiensis (strain G4 / LMG 22486) (Burkholderia cepacia (strain R1808)) protein is 3-demethoxyubiquinol 3-hydroxylase.